Consider the following 389-residue polypeptide: Na(+)/H(+) antiporter NhaA 1 (389 aa).

11 helical membrane-spanning segments follow: residues 12–32 (VLNE…ALLV), 62–82 (FLLW…GLEL), 97–117 (IVLP…LFAL), 128–148 (GWAI…MMCG), 157–177 (IFLL…IAIF), 184–204 (IVAF…NILG), 220–240 (ISVL…AFFI), 260–280 (FWLA…VNLS), 282–302 (IDIG…LFVG), 331–351 (LYGV…IDGL), and 365–385 (LAIL…LKFF).

This sequence belongs to the NhaA Na(+)/H(+) (TC 2.A.33) antiporter family.

It localises to the cell inner membrane. The enzyme catalyses Na(+)(in) + 2 H(+)(out) = Na(+)(out) + 2 H(+)(in). Na(+)/H(+) antiporter that extrudes sodium in exchange for external protons. The polypeptide is Na(+)/H(+) antiporter NhaA 1 (Campylobacter jejuni subsp. jejuni serotype O:6 (strain 81116 / NCTC 11828)).